A 372-amino-acid chain; its full sequence is Pepsin A (372 aa).

A propeptide spans 1–42 (activation peptide); that stretch reads MSVVKIPLVKKKSLRQNLIENGKLKEFMRTHKYNLGSKYIRE. Positions 60 to 369 constitute a Peptidase A1 domain; it reads YFGTIGIGTP…DRGNNQIGLA (310 aa). D78 is a catalytic residue. An intrachain disulfide couples C91 to C96. At S114 the chain carries Phosphoserine. The cysteines at positions 252 and 256 are disulfide-linked. The active site involves D261. A disulfide bridge connects residues C295 and C328.

Belongs to the peptidase A1 family.

The protein localises to the secreted. It carries out the reaction Preferential cleavage: hydrophobic, preferably aromatic, residues in P1 and P1' positions. Cleaves 1-Phe-|-Val-2, 4-Gln-|-His-5, 13-Glu-|-Ala-14, 14-Ala-|-Leu-15, 15-Leu-|-Tyr-16, 16-Tyr-|-Leu-17, 23-Gly-|-Phe-24, 24-Phe-|-Phe-25 and 25-Phe-|-Tyr-26 bonds in the B chain of insulin.. Shows particularly broad specificity; although bonds involving phenylalanine and leucine are preferred, many others are also cleaved to some extent. This chain is Pepsin A (PGA), found in Bos taurus (Bovine).